A 485-amino-acid polypeptide reads, in one-letter code: NADH-quinone oxidoreductase subunit N (485 aa).

The next 14 membrane-spanning stretches (helical) occupy residues 8–28 (LIALLPLLIVGLTVVVVMLSI), 35–55 (FLNATLSVIGLNAALVSLWFV), 71–91 (GFAMLYTGLVLLASLATCTFA), 105–125 (FYLLVLIAALGGILLANANHL), 127–147 (SLFLGIELISLPLFGLVGYAF), 159–179 (YTILSAAASSFLLFGMALVYA), 203–223 (LLAGFGMMIVGLGFKLSLVPF), 235–255 (PAPVSTFLATASKIAIFGVVM), 271–291 (VVLAIIAFASIIFGNLMALSQ), 297–317 (LLGYSSISHLGYLLVALIALQ), 326–346 (VGVYLAGYLFSSLGAFGVVSL), 373–393 (AAVMTVMMLSLAGIPMTLGFI), 408–430 (WWLVGAVVVGSAIGLYYYLRVAV), and 450–470 (YSAGGIVVLISALLVLVLGVW).

Belongs to the complex I subunit 2 family. NDH-1 is composed of 13 different subunits. Subunits NuoA, H, J, K, L, M, N constitute the membrane sector of the complex.

It is found in the cell inner membrane. The catalysed reaction is a quinone + NADH + 5 H(+)(in) = a quinol + NAD(+) + 4 H(+)(out). NDH-1 shuttles electrons from NADH, via FMN and iron-sulfur (Fe-S) centers, to quinones in the respiratory chain. The immediate electron acceptor for the enzyme in this species is believed to be ubiquinone. Couples the redox reaction to proton translocation (for every two electrons transferred, four hydrogen ions are translocated across the cytoplasmic membrane), and thus conserves the redox energy in a proton gradient. This Shigella boydii serotype 4 (strain Sb227) protein is NADH-quinone oxidoreductase subunit N.